We begin with the raw amino-acid sequence, 320 residues long: PUP1 protein homolog (320 aa).

2 helical membrane-spanning segments follow: residues 66-85 and 100-119; these read MWGG…AYRY and FVLG…RSMY. Positions 205 to 320 are disordered; sequence GGVFNGSPFM…QSGRYGGNRS (116 aa). Residue Ser230 is modified to Phosphoserine. A compositionally biased stretch (polar residues) spans 253–266; sequence GDNSSSSSWENIRN. Basic and acidic residues predominate over residues 267-284; that stretch reads TSRDQSQESDASVDHESD.

Belongs to the PUP1 family.

It localises to the mitochondrion membrane. This chain is PUP1 protein homolog, found in Saccharomyces cerevisiae (strain ATCC 204508 / S288c) (Baker's yeast).